The following is a 79-amino-acid chain: Cytochrome c oxidase subunit 7A1, mitochondrial (79 aa).

The transit peptide at 1–21 (MQALRVSQALIRSFSSTARNR) directs the protein to the mitochondrion. Residues 22 to 46 (FQNRVREKQKLFQEDNDIPLYLKGG) are Mitochondrial matrix-facing. A helical transmembrane segment spans residues 47 to 75 (IVDNILYRVTMTLCLGGTVYSLYSLGWAS). The Mitochondrial intermembrane portion of the chain corresponds to 76-79 (FPRN).

The protein belongs to the cytochrome c oxidase VIIa family. In terms of assembly, component of the complex IV (CIV, cytochrome c oxidase), a multisubunit enzyme composed of 14 subunits. The complex is composed of a catalytic core of 3 subunits MT-CO1, MT-CO2 and MT-CO3, encoded in the mitochondrial DNA, and 11 supernumerary subunits COX4I1 (or COX4I2), COX5A, COX5B, COX6A2 (or COX6A1), COX6B1 (or COX6B2), COX6C, COX7A1 (or COX7A2), COX7B, COX7C, COX8B and NDUFA4, which are encoded in the nuclear genome. The complex exists as a monomer or a dimer and forms supercomplexes (SCs) in the inner mitochondrial membrane with NADH-ubiquinone oxidoreductase (complex I, CI) and ubiquinol-cytochrome c oxidoreductase (cytochrome b-c1 complex, complex III, CIII), resulting in different assemblies (supercomplex SCI(1)III(2)IV(1) and megacomplex MCI(2)III(2)IV(2)).

The protein localises to the mitochondrion inner membrane. It participates in energy metabolism; oxidative phosphorylation. In terms of biological role, component of the mitochondrial respiratory complex IV (CIV, also named cytochrome c oxidase complex), the last enzyme in the mitochondrial electron transport chain which drives oxidative phosphorylation. The CIV complex is the component of the respiratory chain that catalyzes the reduction of oxygen to water. Acts as an assembly factor that specifically drives the homodimerization of CIV complexes, mediating the formation of mitochondrial respiratory supercomplexes (respirasomes) containing two CIV: supercomplxes with two molecules of CIV show improved activity. Despite being highly expressed in brown adipose tissue, not required for thermogenesis. The sequence is that of Cytochrome c oxidase subunit 7A1, mitochondrial (COX7A1) from Homo sapiens (Human).